Here is a 445-residue protein sequence, read N- to C-terminus: Rab GDP dissociation inhibitor beta (445 aa).

Residue M1 is modified to N-acetylmethionine. K57 carries the post-translational modification N6-succinyllysine. K112 is modified (N6-acetyllysine). Position 130 is a phosphoserine (S130). N6-acetyllysine is present on K269. Position 382 is a phosphoserine (S382).

The protein belongs to the Rab GDI family. Interacts with RHOH. Interacts with the GDP-bound inactive forms of RAB3A, RAB3B, RAB3C, RAB5A, RAB5B, RAB5C, RAB8A, RAB8B, RAB10, RAB12, RAB35, and RAB43; binds RAB3D to a lesser extent. Interacts with DZIP1; this interaction negatively regulates the interaction of GDI2 with GDP-bound RAB8A.

It is found in the cytoplasm. Its subcellular location is the membrane. It localises to the golgi apparatus. The protein resides in the trans-Golgi network. In terms of biological role, GDP-dissociation inhibitor preventing the GDP to GTP exchange of most Rab proteins. By keeping these small GTPases in their inactive GDP-bound form regulates intracellular membrane trafficking. Negatively regulates protein transport to the cilium and ciliogenesis through the inhibition of RAB8A. This chain is Rab GDP dissociation inhibitor beta (GDI2), found in Pongo abelii (Sumatran orangutan).